A 196-amino-acid chain; its full sequence is HTH-type transcriptional regulator BetI (196 aa).

An HTH tetR-type domain is found at 8 to 68 (EVRRAQLIDA…ATMRHILRDL (61 aa)). The H-T-H motif DNA-binding region spans 31–50 (TLASVAQRANISTGIVSHYF).

Its pathway is amine and polyamine biosynthesis; betaine biosynthesis via choline pathway [regulation]. Its function is as follows. Repressor involved in the biosynthesis of the osmoprotectant glycine betaine. It represses transcription of the choline transporter BetT and the genes of BetAB involved in the synthesis of glycine betaine. In Paraburkholderia phymatum (strain DSM 17167 / CIP 108236 / LMG 21445 / STM815) (Burkholderia phymatum), this protein is HTH-type transcriptional regulator BetI.